Consider the following 456-residue polypeptide: Bifunctional protein GlmU (456 aa).

Residues 1 to 229 (MLNNAMSVVI…LSEVEGVNNR (229 aa)) form a pyrophosphorylase region. Residues 11-14 (LAAG), K25, Q76, 81-82 (GT), 103-105 (YGD), G140, E154, N169, and N227 contribute to the UDP-N-acetyl-alpha-D-glucosamine site. D105 lines the Mg(2+) pocket. N227 is a binding site for Mg(2+). Residues 230–250 (LQLSRLERVYQSEQAEKLLLA) are linker. The interval 251 to 456 (GVMLRDPARF…EGWRRPVKKK (206 aa)) is N-acetyltransferase. R333 and K351 together coordinate UDP-N-acetyl-alpha-D-glucosamine. The active-site Proton acceptor is the H363. Positions 366 and 377 each coordinate UDP-N-acetyl-alpha-D-glucosamine. Acetyl-CoA-binding positions include A380, 386-387 (NY), S405, A423, and R440.

The protein in the N-terminal section; belongs to the N-acetylglucosamine-1-phosphate uridyltransferase family. This sequence in the C-terminal section; belongs to the transferase hexapeptide repeat family. As to quaternary structure, homotrimer. The cofactor is Mg(2+).

The protein localises to the cytoplasm. It carries out the reaction alpha-D-glucosamine 1-phosphate + acetyl-CoA = N-acetyl-alpha-D-glucosamine 1-phosphate + CoA + H(+). The enzyme catalyses N-acetyl-alpha-D-glucosamine 1-phosphate + UTP + H(+) = UDP-N-acetyl-alpha-D-glucosamine + diphosphate. Its pathway is nucleotide-sugar biosynthesis; UDP-N-acetyl-alpha-D-glucosamine biosynthesis; N-acetyl-alpha-D-glucosamine 1-phosphate from alpha-D-glucosamine 6-phosphate (route II): step 2/2. The protein operates within nucleotide-sugar biosynthesis; UDP-N-acetyl-alpha-D-glucosamine biosynthesis; UDP-N-acetyl-alpha-D-glucosamine from N-acetyl-alpha-D-glucosamine 1-phosphate: step 1/1. It functions in the pathway bacterial outer membrane biogenesis; LPS lipid A biosynthesis. Catalyzes the last two sequential reactions in the de novo biosynthetic pathway for UDP-N-acetylglucosamine (UDP-GlcNAc). The C-terminal domain catalyzes the transfer of acetyl group from acetyl coenzyme A to glucosamine-1-phosphate (GlcN-1-P) to produce N-acetylglucosamine-1-phosphate (GlcNAc-1-P), which is converted into UDP-GlcNAc by the transfer of uridine 5-monophosphate (from uridine 5-triphosphate), a reaction catalyzed by the N-terminal domain. The chain is Bifunctional protein GlmU from Escherichia coli O45:K1 (strain S88 / ExPEC).